Reading from the N-terminus, the 338-residue chain is Formimidoylglutamase (338 aa).

Residues H137, D166, H168, D170, C259, and D261 each coordinate Mn(2+).

The protein belongs to the arginase family. It depends on Mn(2+) as a cofactor.

It carries out the reaction N-formimidoyl-L-glutamate + H2O = formamide + L-glutamate. The protein operates within amino-acid degradation; L-histidine degradation into L-glutamate; L-glutamate from N-formimidoyl-L-glutamate (hydrolase route): step 1/1. In terms of biological role, catalyzes the conversion of N-formimidoyl-L-glutamate to L-glutamate and formamide. The sequence is that of Formimidoylglutamase from Clostridium tetani (strain Massachusetts / E88).